Here is a 427-residue protein sequence, read N- to C-terminus: MRKCKIFVGNSHPELGNMVCQRLGIEPAPCTLKKFANGETSVQIGVSVRDEDVYVIQSGSPSINDDIMELLILVSACRGGSARKITAVIPQFPYSKQCKMKRHRGAITARMLANLLVMAGADHVVSMDLHASQMQGFFTKPVDNLYGGPSLAKWIRENVEDYEDAVVVSKNPGGTKRVTALADSLKINFAMIHTDRRRSKDLYSQNKDLQQLKLRKQSMLRKNRPIIRQGDHPNEEENIILSNGIQTARIRNGHVIGDDEADDDEDAILESDSELHSIDGLDSHGLGGTYDAVDSEDEEEIPVLYREQLITLVGNVRGRSAIILDDMIDRPGSFISAAEHLVQNCGAKKVYVVATHGIFTGDCLEELEKSDAIDTIVVTNTYPISGERIAGSKKLVTIDVSPIFAECIRRDHYGESISVLFDSLAAL.

Residues D128, H130, and D143 each coordinate Mg(2+). S199, S218, S271, and S295 each carry phosphoserine.

This sequence belongs to the ribose-phosphate pyrophosphokinase family.

It localises to the cytoplasm. The catalysed reaction is D-ribose 5-phosphate + ATP = 5-phospho-alpha-D-ribose 1-diphosphate + AMP + H(+). Its pathway is metabolic intermediate biosynthesis; 5-phospho-alpha-D-ribose 1-diphosphate biosynthesis; 5-phospho-alpha-D-ribose 1-diphosphate from D-ribose 5-phosphate (route I): step 1/1. 5-phosphoribose 1-diphosphate synthase involved in nucleotide, histidine, and tryptophan biosynthesis. Active in heteromultimeric complexes with other 5-phosphoribose 1-diphosphate synthases (PRS2, PRS3, PRS4 and PRS5). The chain is Ribose-phosphate pyrophosphokinase 1 (PRS1) from Saccharomyces cerevisiae (strain ATCC 204508 / S288c) (Baker's yeast).